Here is a 311-residue protein sequence, read N- to C-terminus: GTP cyclohydrolase MptA (311 aa).

The protein belongs to the GTP cyclohydrolase IV family. Homodimer. Fe(2+) serves as cofactor.

It catalyses the reaction GTP + H2O = 7,8-dihydroneopterin 2',3'-cyclic phosphate + formate + diphosphate + H(+). It participates in cofactor biosynthesis; 5,6,7,8-tetrahydromethanopterin biosynthesis. Its function is as follows. Converts GTP to 7,8-dihydro-D-neopterin 2',3'-cyclic phosphate, the first intermediate in the biosynthesis of coenzyme methanopterin. The protein is GTP cyclohydrolase MptA of Methanobrevibacter smithii (strain ATCC 35061 / DSM 861 / OCM 144 / PS).